The sequence spans 227 residues: Cytochrome c oxidase subunit 2 (227 aa).

Residues 1–14 (MAYPFELGFQDATS) lie on the Mitochondrial intermembrane side of the membrane. Residues 15–45 (PIMEELLHFHDHTLMIVFLISSLVLYIISLM) form a helical membrane-spanning segment. The Mitochondrial matrix segment spans residues 46–59 (LTTKLTHTSTMDAQ). A helical transmembrane segment spans residues 60–87 (EVETIWTILPAIILILIALPSLRVLYMM). Residues 88–227 (DEINDPSLTV…HFENWSSSML (140 aa)) are Mitochondrial intermembrane-facing. Residues H161, C196, E198, C200, H204, and M207 each contribute to the Cu cation site. E198 is a binding site for Mg(2+).

This sequence belongs to the cytochrome c oxidase subunit 2 family. In terms of assembly, component of the cytochrome c oxidase (complex IV, CIV), a multisubunit enzyme composed of 14 subunits. The complex is composed of a catalytic core of 3 subunits MT-CO1, MT-CO2 and MT-CO3, encoded in the mitochondrial DNA, and 11 supernumerary subunits COX4I, COX5A, COX5B, COX6A, COX6B, COX6C, COX7A, COX7B, COX7C, COX8 and NDUFA4, which are encoded in the nuclear genome. The complex exists as a monomer or a dimer and forms supercomplexes (SCs) in the inner mitochondrial membrane with NADH-ubiquinone oxidoreductase (complex I, CI) and ubiquinol-cytochrome c oxidoreductase (cytochrome b-c1 complex, complex III, CIII), resulting in different assemblies (supercomplex SCI(1)III(2)IV(1) and megacomplex MCI(2)III(2)IV(2)). Found in a complex with TMEM177, COA6, COX18, COX20, SCO1 and SCO2. Interacts with TMEM177 in a COX20-dependent manner. Interacts with COX20. Interacts with COX16. Cu cation is required as a cofactor.

Its subcellular location is the mitochondrion inner membrane. The catalysed reaction is 4 Fe(II)-[cytochrome c] + O2 + 8 H(+)(in) = 4 Fe(III)-[cytochrome c] + 2 H2O + 4 H(+)(out). In terms of biological role, component of the cytochrome c oxidase, the last enzyme in the mitochondrial electron transport chain which drives oxidative phosphorylation. The respiratory chain contains 3 multisubunit complexes succinate dehydrogenase (complex II, CII), ubiquinol-cytochrome c oxidoreductase (cytochrome b-c1 complex, complex III, CIII) and cytochrome c oxidase (complex IV, CIV), that cooperate to transfer electrons derived from NADH and succinate to molecular oxygen, creating an electrochemical gradient over the inner membrane that drives transmembrane transport and the ATP synthase. Cytochrome c oxidase is the component of the respiratory chain that catalyzes the reduction of oxygen to water. Electrons originating from reduced cytochrome c in the intermembrane space (IMS) are transferred via the dinuclear copper A center (CU(A)) of subunit 2 and heme A of subunit 1 to the active site in subunit 1, a binuclear center (BNC) formed by heme A3 and copper B (CU(B)). The BNC reduces molecular oxygen to 2 water molecules using 4 electrons from cytochrome c in the IMS and 4 protons from the mitochondrial matrix. This chain is Cytochrome c oxidase subunit 2 (MT-CO2), found in Sciurus carolinensis (Eastern gray squirrel).